Consider the following 216-residue polypeptide: Large ribosomal subunit protein uL3 (216 aa).

The tract at residues 134–153 is disordered; it reads RATHGNSRSHNVPGSIGMAQ. Glutamine 153 is subject to N5-methylglutamine.

This sequence belongs to the universal ribosomal protein uL3 family. In terms of assembly, part of the 50S ribosomal subunit. Forms a cluster with proteins L14 and L19. In terms of processing, methylated by PrmB.

Functionally, one of the primary rRNA binding proteins, it binds directly near the 3'-end of the 23S rRNA, where it nucleates assembly of the 50S subunit. In Cupriavidus taiwanensis (strain DSM 17343 / BCRC 17206 / CCUG 44338 / CIP 107171 / LMG 19424 / R1) (Ralstonia taiwanensis (strain LMG 19424)), this protein is Large ribosomal subunit protein uL3.